Reading from the N-terminus, the 188-residue chain is MGTPNDQAVLQAIFNPDSPFGDIVGLDLGEEAEKEVDEGEVFPRAQLEQSKALELQAVIAAEAGDLSTALERFGQAINLLPERASAYNNRAQARRLQGDVAGALEDLERALALSGGRGRTARQGFVQRGLVARLQGRDDDARRDFERAARLGSPFARRQLVLLNPYAALCNRMLADVMGQLRRPCDER.

TPR repeat units lie at residues 50–83, 85–117, and 122–155; these read SKAL…LPER, SAYN…SGGR, and RQGF…GSPF.

The protein belongs to the TTC36 family.

The chain is Tetratricopeptide repeat protein 36 (TTC36) from Bos taurus (Bovine).